The chain runs to 430 residues: Adenylosuccinate synthetase (430 aa).

GTP is bound by residues 12–18 (GDEGKGK) and 40–42 (GHT). The Proton acceptor role is filled by Asp13. Mg(2+) contacts are provided by Asp13 and Gly40. IMP-binding positions include 13–16 (DEGK), 38–41 (NAGH), Thr130, Arg144, Gln224, Thr239, and Arg303. His41 acts as the Proton donor in catalysis. 299–305 (VNTGRKR) serves as a coordination point for substrate. GTP is bound by residues Arg305, 331 to 333 (KLD), and 413 to 415 (STS).

This sequence belongs to the adenylosuccinate synthetase family. Homodimer. Mg(2+) is required as a cofactor.

Its subcellular location is the cytoplasm. The catalysed reaction is IMP + L-aspartate + GTP = N(6)-(1,2-dicarboxyethyl)-AMP + GDP + phosphate + 2 H(+). Its pathway is purine metabolism; AMP biosynthesis via de novo pathway; AMP from IMP: step 1/2. Functionally, plays an important role in the de novo pathway of purine nucleotide biosynthesis. Catalyzes the first committed step in the biosynthesis of AMP from IMP. The protein is Adenylosuccinate synthetase of Rhodopseudomonas palustris (strain ATCC BAA-98 / CGA009).